The chain runs to 292 residues: Ribosomal RNA small subunit methyltransferase A (292 aa).

Positions 28, 30, 55, 76, 101, and 126 each coordinate S-adenosyl-L-methionine.

It belongs to the class I-like SAM-binding methyltransferase superfamily. rRNA adenine N(6)-methyltransferase family. RsmA subfamily.

It localises to the cytoplasm. It catalyses the reaction adenosine(1518)/adenosine(1519) in 16S rRNA + 4 S-adenosyl-L-methionine = N(6)-dimethyladenosine(1518)/N(6)-dimethyladenosine(1519) in 16S rRNA + 4 S-adenosyl-L-homocysteine + 4 H(+). In terms of biological role, specifically dimethylates two adjacent adenosines (A1518 and A1519) in the loop of a conserved hairpin near the 3'-end of 16S rRNA in the 30S particle. May play a critical role in biogenesis of 30S subunits. The polypeptide is Ribosomal RNA small subunit methyltransferase A (Bacillus cytotoxicus (strain DSM 22905 / CIP 110041 / 391-98 / NVH 391-98)).